Consider the following 399-residue polypeptide: Beta sliding clamp (399 aa).

It belongs to the beta sliding clamp family. As to quaternary structure, forms a ring-shaped head-to-tail homodimer around DNA which binds and tethers DNA polymerases and other proteins to the DNA. The DNA replisome complex has a single clamp-loading complex (3 tau and 1 each of delta, delta', psi and chi subunits) which binds 3 Pol III cores (1 core on the leading strand and 2 on the lagging strand) each with a beta sliding clamp dimer. Additional proteins in the replisome are other copies of gamma, psi and chi, Ssb, DNA helicase and RNA primase.

The protein localises to the cytoplasm. Its function is as follows. Confers DNA tethering and processivity to DNA polymerases and other proteins. Acts as a clamp, forming a ring around DNA (a reaction catalyzed by the clamp-loading complex) which diffuses in an ATP-independent manner freely and bidirectionally along dsDNA. Initially characterized for its ability to contact the catalytic subunit of DNA polymerase III (Pol III), a complex, multichain enzyme responsible for most of the replicative synthesis in bacteria; Pol III exhibits 3'-5' exonuclease proofreading activity. The beta chain is required for initiation of replication as well as for processivity of DNA replication. The protein is Beta sliding clamp (dnaN) of Mycolicibacterium paratuberculosis (strain ATCC BAA-968 / K-10) (Mycobacterium paratuberculosis).